Here is a 322-residue protein sequence, read N- to C-terminus: Putative integrase ORF3 (322 aa).

In terms of domain architecture, Integrase catalytic spans 153–322 (RGKLTDFKSI…SSKEMFLQNI (170 aa)).

Belongs to the plectrovirus integrase ORF3 family.

This protein may encode an integrase, which is necessary for integration of the viral DNA into host genome. The chain is Putative integrase ORF3 from Spiroplasma virus SpV1-R8A2 B (SpV1).